We begin with the raw amino-acid sequence, 273 residues long: 3-methyl-2-oxobutanoate hydroxymethyltransferase (273 aa).

Mg(2+) contacts are provided by Asp49 and Asp88. Residues 49-50, Asp88, and Lys118 contribute to the 3-methyl-2-oxobutanoate site; that span reads DS. Residue Glu120 coordinates Mg(2+). Catalysis depends on Glu187, which acts as the Proton acceptor.

This sequence belongs to the PanB family. In terms of assembly, homodecamer; pentamer of dimers. It depends on Mg(2+) as a cofactor.

It localises to the cytoplasm. The enzyme catalyses 3-methyl-2-oxobutanoate + (6R)-5,10-methylene-5,6,7,8-tetrahydrofolate + H2O = 2-dehydropantoate + (6S)-5,6,7,8-tetrahydrofolate. Its pathway is cofactor biosynthesis; (R)-pantothenate biosynthesis; (R)-pantoate from 3-methyl-2-oxobutanoate: step 1/2. Its function is as follows. Catalyzes the reversible reaction in which hydroxymethyl group from 5,10-methylenetetrahydrofolate is transferred onto alpha-ketoisovalerate to form ketopantoate. The sequence is that of 3-methyl-2-oxobutanoate hydroxymethyltransferase from Sinorhizobium medicae (strain WSM419) (Ensifer medicae).